The following is a 327-amino-acid chain: Malate dehydrogenase (327 aa).

Residue 11 to 17 coordinates NAD(+); the sequence is GAAGQIS. The substrate site is built by Arg92 and Arg98. NAD(+)-binding positions include Asn105, Gln112, and 129–131; that span reads VGN. The substrate site is built by Asn131 and Arg162. The active-site Proton acceptor is the His187.

It belongs to the LDH/MDH superfamily. MDH type 2 family.

It carries out the reaction (S)-malate + NAD(+) = oxaloacetate + NADH + H(+). Catalyzes the reversible oxidation of malate to oxaloacetate. The sequence is that of Malate dehydrogenase from Nitrosomonas europaea (strain ATCC 19718 / CIP 103999 / KCTC 2705 / NBRC 14298).